We begin with the raw amino-acid sequence, 125 residues long: Phosphoribosyl-AMP cyclohydrolase (125 aa).

Mg(2+) is bound at residue Asp74. A Zn(2+)-binding site is contributed by Cys75. Positions 76 and 78 each coordinate Mg(2+). The Zn(2+) site is built by Cys92 and Cys99.

It belongs to the PRA-CH family. As to quaternary structure, homodimer. Mg(2+) is required as a cofactor. Zn(2+) serves as cofactor.

The protein localises to the cytoplasm. The catalysed reaction is 1-(5-phospho-beta-D-ribosyl)-5'-AMP + H2O = 1-(5-phospho-beta-D-ribosyl)-5-[(5-phospho-beta-D-ribosylamino)methylideneamino]imidazole-4-carboxamide. It participates in amino-acid biosynthesis; L-histidine biosynthesis; L-histidine from 5-phospho-alpha-D-ribose 1-diphosphate: step 3/9. Functionally, catalyzes the hydrolysis of the adenine ring of phosphoribosyl-AMP. In Desulforapulum autotrophicum (strain ATCC 43914 / DSM 3382 / VKM B-1955 / HRM2) (Desulfobacterium autotrophicum), this protein is Phosphoribosyl-AMP cyclohydrolase.